We begin with the raw amino-acid sequence, 279 residues long: Urease accessory protein UreD (279 aa).

Belongs to the UreD family. UreD, UreF and UreG form a complex that acts as a GTP-hydrolysis-dependent molecular chaperone, activating the urease apoprotein by helping to assemble the nickel containing metallocenter of UreC. The UreE protein probably delivers the nickel.

The protein localises to the cytoplasm. Its function is as follows. Required for maturation of urease via the functional incorporation of the urease nickel metallocenter. The protein is Urease accessory protein UreD of Streptococcus thermophilus (strain CNRZ 1066).